The chain runs to 421 residues: Gamma-glutamyl phosphate reductase (421 aa).

The protein belongs to the gamma-glutamyl phosphate reductase family.

The protein resides in the cytoplasm. It carries out the reaction L-glutamate 5-semialdehyde + phosphate + NADP(+) = L-glutamyl 5-phosphate + NADPH + H(+). It functions in the pathway amino-acid biosynthesis; L-proline biosynthesis; L-glutamate 5-semialdehyde from L-glutamate: step 2/2. In terms of biological role, catalyzes the NADPH-dependent reduction of L-glutamate 5-phosphate into L-glutamate 5-semialdehyde and phosphate. The product spontaneously undergoes cyclization to form 1-pyrroline-5-carboxylate. The polypeptide is Gamma-glutamyl phosphate reductase (Pseudomonas aeruginosa (strain LESB58)).